The primary structure comprises 308 residues: Aspartate carbamoyltransferase catalytic subunit (308 aa).

Residues arginine 57 and threonine 58 each contribute to the carbamoyl phosphate site. Lysine 86 is an L-aspartate binding site. Carbamoyl phosphate is bound by residues arginine 107, histidine 135, and glutamine 138. The L-aspartate site is built by arginine 168 and arginine 229. Carbamoyl phosphate contacts are provided by leucine 268 and proline 269.

It belongs to the aspartate/ornithine carbamoyltransferase superfamily. ATCase family. In terms of assembly, heterooligomer of catalytic and regulatory chains.

It carries out the reaction carbamoyl phosphate + L-aspartate = N-carbamoyl-L-aspartate + phosphate + H(+). It participates in pyrimidine metabolism; UMP biosynthesis via de novo pathway; (S)-dihydroorotate from bicarbonate: step 2/3. Functionally, catalyzes the condensation of carbamoyl phosphate and aspartate to form carbamoyl aspartate and inorganic phosphate, the committed step in the de novo pyrimidine nucleotide biosynthesis pathway. The protein is Aspartate carbamoyltransferase catalytic subunit of Pyrococcus furiosus (strain ATCC 43587 / DSM 3638 / JCM 8422 / Vc1).